Here is a 280-residue protein sequence, read N- to C-terminus: Bifunctional protein FolD (280 aa).

Residues 164–166, Ser-189, and Val-230 each bind NADP(+); that span reads GRS.

The protein belongs to the tetrahydrofolate dehydrogenase/cyclohydrolase family. As to quaternary structure, homodimer.

The catalysed reaction is (6R)-5,10-methylene-5,6,7,8-tetrahydrofolate + NADP(+) = (6R)-5,10-methenyltetrahydrofolate + NADPH. It carries out the reaction (6R)-5,10-methenyltetrahydrofolate + H2O = (6R)-10-formyltetrahydrofolate + H(+). The protein operates within one-carbon metabolism; tetrahydrofolate interconversion. Its function is as follows. Catalyzes the oxidation of 5,10-methylenetetrahydrofolate to 5,10-methenyltetrahydrofolate and then the hydrolysis of 5,10-methenyltetrahydrofolate to 10-formyltetrahydrofolate. In Geotalea daltonii (strain DSM 22248 / JCM 15807 / FRC-32) (Geobacter daltonii), this protein is Bifunctional protein FolD.